A 681-amino-acid polypeptide reads, in one-letter code: MSKELAAMGPGASGDGVRTETAPHIALDSRVGLHAYDISVVVIYFVFVIAVGIWSSIRASRGTIGGYFLAGRSMSWWPIGASLMSSNVGSGLFIGLAGTGAAGGLAVGGFEWNATWLLLALGWVFVPVYIAAGVVTMPQYLKKRFGGQRIQVYMSVLSLILYIFTKISTDIFSGALFIQMALGWNLYLSTGILLVVTAVYTIAGGLMAVIYTDALQTVIMVGGALVLMFLGFQDVGWYPGLEQRYRQAIPNVTVPNTTCHLPRPDAFHILRDPVSGDIPWPGLIFGLTVLATWCWCTDQVIVQRSLSAKSLSHAKGGSVLGGYLKILPMFFIVMPGMISRALFPDEVGCVDPDVCQRICGARVGCSNIAYPKLVMALMPVGLRGLMIAVIMAALMSSLTSIFNSSSTLFTIDVWQRFRRKSTEQELMVVGRVFVVFLVVISILWIPIIQSSNSGQLFDYIQAVTSYLAPPITALFLLAIFCKRVTEPGAFWGLVFGLGVGLLRMILEFSYPAPACGEVDRRPAVLKDFHYLYFAILLCGLTAIVIVIVSLCTTPIPEEQLTRLTWWTRNCPLSELEKEAHESTPEISERPAGECPAGGGAAENSSLGQEQPEAPSRSWGKLLWSWFCGLSGTPEQALSPAEKAALEQKLTSIEEEPLWRHVCNINAVLLLAINIFLWGYFA.

The Extracellular portion of the chain corresponds to 1-36; the sequence is MSKELAAMGPGASGDGVRTETAPHIALDSRVGLHAY. Residues 37–57 traverse the membrane as a helical segment; that stretch reads DISVVVIYFVFVIAVGIWSSI. Topologically, residues 58 to 75 are cytoplasmic; it reads RASRGTIGGYFLAGRSMS. The chain crosses the membrane as a helical span at residues 76–98; that stretch reads WWPIGASLMSSNVGSGLFIGLAG. Topologically, residues 99–114 are extracellular; sequence TGAAGGLAVGGFEWNA. The chain crosses the membrane as a helical span at residues 115 to 135; sequence TWLLLALGWVFVPVYIAAGVV. At 136-157 the chain is on the cytoplasmic side; it reads TMPQYLKKRFGGQRIQVYMSVL. A helical transmembrane segment spans residues 158-178; that stretch reads SLILYIFTKISTDIFSGALFI. Topologically, residues 179–190 are extracellular; the sequence is QMALGWNLYLST. The helical transmembrane segment at 191-211 threads the bilayer; sequence GILLVVTAVYTIAGGLMAVIY. The Cytoplasmic portion of the chain corresponds to 212-217; it reads TDALQT. A helical membrane pass occupies residues 218 to 238; it reads VIMVGGALVLMFLGFQDVGWY. Over 239–275 the chain is Extracellular; that stretch reads PGLEQRYRQAIPNVTVPNTTCHLPRPDAFHILRDPVS. N-linked (GlcNAc...) asparagine glycosylation is present at asparagine 251. A helical transmembrane segment spans residues 276 to 296; sequence GDIPWPGLIFGLTVLATWCWC. Residues 297–317 lie on the Cytoplasmic side of the membrane; that stretch reads TDQVIVQRSLSAKSLSHAKGG. Residues 318–338 form a helical membrane-spanning segment; the sequence is SVLGGYLKILPMFFIVMPGMI. The Extracellular segment spans residues 339–383; sequence SRALFPDEVGCVDPDVCQRICGARVGCSNIAYPKLVMALMPVGLR. The helical transmembrane segment at 384–406 threads the bilayer; the sequence is GLMIAVIMAALMSSLTSIFNSSS. At 407-427 the chain is on the cytoplasmic side; sequence TLFTIDVWQRFRRKSTEQELM. Residues 428 to 448 form a helical membrane-spanning segment; that stretch reads VVGRVFVVFLVVISILWIPII. The Extracellular portion of the chain corresponds to 449-459; that stretch reads QSSNSGQLFDY. A helical transmembrane segment spans residues 460-480; the sequence is IQAVTSYLAPPITALFLLAIF. Over 481–487 the chain is Cytoplasmic; sequence CKRVTEP. Residues 488–508 traverse the membrane as a helical segment; the sequence is GAFWGLVFGLGVGLLRMILEF. Residues 509–530 lie on the Extracellular side of the membrane; it reads SYPAPACGEVDRRPAVLKDFHY. Residues 531-551 traverse the membrane as a helical segment; sequence LYFAILLCGLTAIVIVIVSLC. Residues 552 to 660 lie on the Cytoplasmic side of the membrane; the sequence is TTPIPEEQLT…SIEEEPLWRH (109 aa). Residues 579-591 show a composition bias toward basic and acidic residues; it reads AHESTPEISERPA. The disordered stretch occupies residues 579 to 614; sequence AHESTPEISERPAGECPAGGGAAENSSLGQEQPEAP. 2 positions are modified to phosphoserine: serine 604 and serine 605. Residues 661–681 traverse the membrane as a helical segment; sequence VCNINAVLLLAINIFLWGYFA.

This sequence belongs to the sodium:solute symporter (SSF) (TC 2.A.21) family. Expressed in the small intestine, kidney and liver.

It localises to the cell membrane. The catalysed reaction is D-mannose(out) + n Na(+)(out) = D-mannose(in) + n Na(+)(in). Functionally, electrogenic Na(+)-coupled sugar symporter that may play a primary role in D-mannose and possibly D-fructose and D-glucose transport at the plasma membrane. Transporter activity is driven by a transmembrane Na(+) electrochemical gradient set by the Na(+)/K(+) pump. Exclusively recognizes sugar substrates having a pyranose ring with an axial hydroxyl group on carbon 2. This Homo sapiens (Human) protein is Sodium/glucose cotransporter 4.